Consider the following 503-residue polypeptide: Probable DNA double-strand break repair helicase HerA (503 aa).

Residues R122, 131 to 136 (GGGKSN), and 478 to 479 (KI) each bind ATP.

This sequence belongs to the HerA family.

It catalyses the reaction Couples ATP hydrolysis with the unwinding of duplex DNA at the replication fork by translocating in the 5'-3' direction. This creates two antiparallel DNA single strands (ssDNA). The leading ssDNA polymer is the template for DNA polymerase III holoenzyme which synthesizes a continuous strand.. The enzyme catalyses ATP + H2O = ADP + phosphate + H(+). The catalysed reaction is Couples ATP hydrolysis with the unwinding of duplex DNA by translocating in the 3'-5' direction.. Its function is as follows. Involved in DNA double-strand break (DSB) repair. Probably acts with NurA to stimulate resection of the 5' strand and produce the long 3' single-strand that is required for RadA loading. Has DNA-dependent ATPase activity and DNA helicase activity. The chain is Probable DNA double-strand break repair helicase HerA from Methanocaldococcus jannaschii (strain ATCC 43067 / DSM 2661 / JAL-1 / JCM 10045 / NBRC 100440) (Methanococcus jannaschii).